The primary structure comprises 227 residues: Protein lin-28 (227 aa).

Polar residues predominate over residues 1–17; it reads MSTVVSEGRNDGNNRYS. Residues 1–27 form a disordered region; that stretch reads MSTVVSEGRNDGNNRYSPQDEVEDRLP. The CSD domain occupies 52 to 120; sequence RYFGSCKWFN…GREAYAVSGE (69 aa). 2 CCHC-type zinc fingers span residues 143 to 160 and 166 to 183; these read RCFRCGKFATHKAKSCPN and KVCYTCGSEEHVSSICPE. The Zn(2+) site is built by Cys-144, Cys-147, His-153, Cys-158, Cys-168, Cys-171, His-176, and Cys-181. Residues 181-227 are disordered; that stretch reads CPERRRKHRPEQVAAEEAEAARMAAEKSSPTTSDDDIREKNSNSSDE.

Belongs to the lin-28 family. As to quaternary structure, component of a complex at least containing lep-2, lin-28 and the long non-coding RNA lep-5, which mediates the degradation of lin-28. Post-translationally, cleavage by caspase ced-3 during larval development probably induces lin-28 degradation.

The protein localises to the cytoplasm. Functionally, heterochronic protein which controls the choice of stage specific cell fates. Regulates the timing of the second larval stage events (L2 events) in the hypodermis. May negatively regulate the larval to adult transition via the suppression of the microRNA (miRNA) let-7 during L3. Through this regulatory role, controls the timing of the sexual maturation of the nervous system. Also has a role in the fox-1-sex-1-mediated determination of sexual fate. Plays a role in governing the developmental timing of male tail tip morphogenesis. Plays a role in controlling the seam cell number during larval stages. Plays a role in vulval development. This is Protein lin-28 from Caenorhabditis elegans.